Reading from the N-terminus, the 428-residue chain is Glutamate-1-semialdehyde 2,1-aminomutase (428 aa).

Lys-265 carries the post-translational modification N6-(pyridoxal phosphate)lysine.

This sequence belongs to the class-III pyridoxal-phosphate-dependent aminotransferase family. HemL subfamily. As to quaternary structure, homodimer. Requires pyridoxal 5'-phosphate as cofactor.

It is found in the cytoplasm. It carries out the reaction (S)-4-amino-5-oxopentanoate = 5-aminolevulinate. The protein operates within porphyrin-containing compound metabolism; protoporphyrin-IX biosynthesis; 5-aminolevulinate from L-glutamyl-tRNA(Glu): step 2/2. The polypeptide is Glutamate-1-semialdehyde 2,1-aminomutase (Thioalkalivibrio sulfidiphilus (strain HL-EbGR7)).